The primary structure comprises 369 residues: Anhydro-N-acetylmuramic acid kinase (369 aa).

12–19 (GTSMDGID) provides a ligand contact to ATP.

The protein belongs to the anhydro-N-acetylmuramic acid kinase family.

It catalyses the reaction 1,6-anhydro-N-acetyl-beta-muramate + ATP + H2O = N-acetyl-D-muramate 6-phosphate + ADP + H(+). It functions in the pathway amino-sugar metabolism; 1,6-anhydro-N-acetylmuramate degradation. The protein operates within cell wall biogenesis; peptidoglycan recycling. Catalyzes the specific phosphorylation of 1,6-anhydro-N-acetylmuramic acid (anhMurNAc) with the simultaneous cleavage of the 1,6-anhydro ring, generating MurNAc-6-P. Is required for the utilization of anhMurNAc either imported from the medium or derived from its own cell wall murein, and thus plays a role in cell wall recycling. The polypeptide is Anhydro-N-acetylmuramic acid kinase (Shewanella sediminis (strain HAW-EB3)).